A 285-amino-acid chain; its full sequence is Probable endonuclease 4 (285 aa).

9 residues coordinate Zn(2+): H69, H109, E145, D179, H182, H216, D229, H231, and E261.

Belongs to the AP endonuclease 2 family. Requires Zn(2+) as cofactor.

It catalyses the reaction Endonucleolytic cleavage to 5'-phosphooligonucleotide end-products.. Endonuclease IV plays a role in DNA repair. It cleaves phosphodiester bonds at apurinic or apyrimidinic (AP) sites, generating a 3'-hydroxyl group and a 5'-terminal sugar phosphate. The polypeptide is Probable endonuclease 4 (Citrobacter koseri (strain ATCC BAA-895 / CDC 4225-83 / SGSC4696)).